The chain runs to 1225 residues: DNA-directed RNA polymerase subunit beta' (1225 aa).

Positions 60, 62, 75, and 78 each coordinate Zn(2+). 3 residues coordinate Mg(2+): aspartate 450, aspartate 452, and aspartate 454. Residues cysteine 818, cysteine 892, cysteine 899, and cysteine 902 each contribute to the Zn(2+) site.

Belongs to the RNA polymerase beta' chain family. In terms of assembly, the RNAP catalytic core consists of 2 alpha, 1 beta, 1 beta' and 1 omega subunit. When a sigma factor is associated with the core the holoenzyme is formed, which can initiate transcription. It depends on Mg(2+) as a cofactor. The cofactor is Zn(2+).

It catalyses the reaction RNA(n) + a ribonucleoside 5'-triphosphate = RNA(n+1) + diphosphate. DNA-dependent RNA polymerase catalyzes the transcription of DNA into RNA using the four ribonucleoside triphosphates as substrates. The polypeptide is DNA-directed RNA polymerase subunit beta' (Streptococcus pneumoniae serotype 19F (strain G54)).